The sequence spans 460 residues: Serine/threonine-protein kinase UL13 (460 aa).

Residues 1 to 37 form a disordered region; sequence MATRGRPGAKQVADHSVSDGGEQRRIPQKPPGPERCD. A compositionally biased stretch (basic and acidic residues) spans 12–25; sequence VADHSVSDGGEQRR. The Protein kinase domain occupies 95-460; the sequence is LEPYRFLGRG…DVRRTVSALA (366 aa). ATP is bound by residues 101-109 and K120; that span reads LGRGGYGSV. Catalysis depends on D219, which acts as the Proton acceptor.

Belongs to the protein kinase superfamily. Ser/Thr protein kinase family. In terms of processing, autophosphorylated.

It localises to the virion tegument. Its subcellular location is the host nucleus. It carries out the reaction L-seryl-[protein] + ATP = O-phospho-L-seryl-[protein] + ADP + H(+). The catalysed reaction is L-threonyl-[protein] + ATP = O-phospho-L-threonyl-[protein] + ADP + H(+). Its function is as follows. Multifunctional serine/threonine kinase that plays a role in several processes including egress of virus particles from the nucleus, modulation of the actin cytoskeleton and regulation of viral and cellular gene expression. Regulates the nuclear localization of viral envelopment factors UL34 and UL31 homologs, by phosphorylating the US3 kinase homolog, indicating a role in nuclear egress. Disrupts host nuclear lamins, including LMNA and LMNB1. Phosphorylates the viral Fc receptor composed of glycoproteins E (gE) and I (gI). Phosphorylation of glycoprotein E (gE) by UL13 homolog alters its subcellular localization, from the host early endosome to the plasma membrane. Participates in the transcriptional regulation of cellular and viral mRNAs mainly by phosphorylating the viral transcriptional regulator ICP22 homolog. This chain is Serine/threonine-protein kinase UL13 (UL13), found in Amazona oratrix (yellow-headed parrot).